Consider the following 4391-residue polypeptide: Basement membrane-specific heparan sulfate proteoglycan core protein (4391 aa).

The N-terminal stretch at 1–21 is a signal peptide; it reads MGWRAAGALLLALLLHGRLLA. O-linked (GalNAc...) threonine glycosylation is present at threonine 42. 3 O-linked (Xyl...) (heparan sulfate) serine glycosylation sites follow: serine 65, serine 71, and serine 76. Positions 80-191 constitute an SEA domain; the sequence is QMVYFRALVN…QGFQFRRLGT (112 aa). Asparagine 89 carries an N-linked (GlcNAc...) asparagine glycan. 4 LDL-receptor class A domains span residues 198 to 235, 284 to 320, 324 to 360, and 367 to 404; these read ACTE…LNCE, PCGP…LDCG, PCEP…ANCP, and VCGP…FGCM. 12 disulfides stabilise this stretch: cysteine 199-cysteine 212, cysteine 206-cysteine 225, cysteine 219-cysteine 234, cysteine 285-cysteine 297, cysteine 292-cysteine 310, cysteine 304-cysteine 319, cysteine 325-cysteine 337, cysteine 332-cysteine 350, cysteine 344-cysteine 359, cysteine 368-cysteine 381, cysteine 375-cysteine 394, and cysteine 388-cysteine 403. Residues 405–504 form the Ig-like C2-type 1 domain; the sequence is PPQVVTPPRE…VLELVPQRGP (100 aa). The 10-residue stretch at 521 to 530 folds into the Laminin EGF-like 1; first part domain; sequence CFCFGITSVC. Residues 538-730 enclose the Laminin IV type A 1 domain; sequence DQIRLRFDQP…SHGRAHSVEE (193 aa). Residue asparagine 554 is glycosylated (N-linked (GlcNAc...) asparagine). Positions 731–763 constitute a Laminin EGF-like 1; second part domain; the sequence is CRCPIGYSGLSCESCDAHFTRVPGGPYLGTCSG. Intrachain disulfides connect cysteine 764–cysteine 773, cysteine 766–cysteine 780, cysteine 783–cysteine 792, cysteine 795–cysteine 811, cysteine 814–cysteine 829, cysteine 816–cysteine 839, cysteine 842–cysteine 851, cysteine 854–cysteine 869, cysteine 879–cysteine 892, cysteine 894–cysteine 903, and cysteine 906–cysteine 921. 2 Laminin EGF-like domains span residues 764-813 and 814-871; these read CNCN…SCRP and CPCP…KCRP. In terms of domain architecture, Laminin EGF-like 4; truncated spans 879 to 923; sequence CDERGSMGTSGEACRCKNNVVGRLCNECADGSFHLSTRNPDGCLK. Residues 924-933 form the Laminin EGF-like 5; first part domain; sequence CFCMGVSRHC. The Laminin IV type A 2 domain maps to 941–1125; sequence AQLHGASEEP…GQDPALEVEQ (185 aa). One can recognise a Laminin EGF-like 5; second part domain in the interval 1126 to 1158; it reads CSCPPGYRGPSCQDCDTGYTRTPSGLYLGTCER. Disulfide bonds link cysteine 1159–cysteine 1168, cysteine 1161–cysteine 1175, cysteine 1178–cysteine 1187, cysteine 1190–cysteine 1206, cysteine 1209–cysteine 1224, cysteine 1211–cysteine 1234, cysteine 1237–cysteine 1246, cysteine 1249–cysteine 1263, cysteine 1275–cysteine 1287, cysteine 1277–cysteine 1293, cysteine 1295–cysteine 1304, and cysteine 1307–cysteine 1322. Laminin EGF-like domains follow at residues 1159–1208, 1209–1265, and 1275–1324; these read CSCH…DCQL, CPCY…PCQR, and CNCD…GCLP. The 10-residue stretch at 1325–1334 folds into the Laminin EGF-like 9; first part domain; that stretch reads CFCMGITQQC. The 186-residue stretch at 1344–1529 folds into the Laminin IV type A 3 domain; that stretch reads ISTHFAPGDF…NRPRALEVEE (186 aa). Residues 1530–1562 enclose the Laminin EGF-like 9; second part domain; it reads CRCPPGYIGLSCQDCAPGYTRTGSGLYLGHCEL. 8 disulfide bridges follow: cysteine 1563/cysteine 1572, cysteine 1565/cysteine 1579, cysteine 1582/cysteine 1591, cysteine 1594/cysteine 1610, cysteine 1613/cysteine 1628, cysteine 1615/cysteine 1638, cysteine 1641/cysteine 1650, and cysteine 1653/cysteine 1668. 2 consecutive Laminin EGF-like domains span residues 1563 to 1612 and 1613 to 1670; these read CECN…DCQP and CACP…QCLP. 21 consecutive Ig-like C2-type domains span residues 1677–1771, 1772–1865, 1866–1955, 1956–2051, 2052–2151, 2152–2244, 2245–2340, 2341–2436, 2437–2533, 2534–2629, 2630–2726, 2727–2826, 2827–2924, 2925–3021, 3022–3112, 3113–3211, 3212–3298, 3299–3399, 3400–3488, 3489–3574, and 3575–3662; these read LVVE…SKPI, TVTV…TLSA, PVVS…GGGG, PRVQ…ASPP, PVKI…PGST, RPIR…PGPI, PPVR…AGST, QPIR…LGVT, PTVR…QGVA, YPVR…PSVS, PPIR…PGSS, MPIR…PGGA, PPIR…PGLA, QPIY…RLRS, PVIS…HGPP, TVSV…APGA, PQVQ…VESP, PYAT…AGST, PTVQ…ALPS, VLIN…LVQA, and LPQI…PERV. N-linked (GlcNAc...) asparagine glycosylation occurs at asparagine 1755. Asparagine 2121 carries N-linked (GlcNAc...) asparagine glycosylation. The interval 2994 to 3014 is disordered; the sequence is ASGPGPEQEASFTVTVPPSEG. O-linked (Xyl...) (chondroitin sulfate) serine glycosylation occurs at serine 2995. Residues 3003–3014 show a composition bias toward polar residues; that stretch reads ASFTVTVPPSEG. N-linked (GlcNAc...) asparagine glycans are attached at residues asparagine 3072 and asparagine 3105. An N-linked (GlcNAc...) asparagine glycan is attached at asparagine 3279. A Laminin G-like 1 domain is found at 3663-3843; it reads VPYFTQTPYS…DLNLTAHGIS (181 aa). N-linked (GlcNAc...) asparagine glycans are attached at residues asparagine 3780 and asparagine 3836. 7 cysteine pairs are disulfide-bonded: cysteine 3819-cysteine 3845, cysteine 3848-cysteine 3859, cysteine 3853-cysteine 3869, cysteine 3871-cysteine 3880, cysteine 3888-cysteine 3899, cysteine 3893-cysteine 3910, and cysteine 3912-cysteine 3921. EGF-like domains lie at 3844 to 3881 and 3884 to 3922; these read HCPT…SRCE and QALH…LRCE. One can recognise a Laminin G-like 2 domain in the interval 3928-4103; it reads TTPSLSGAGS…LGSQGIGQCY (176 aa). Serine 3933 carries an O-linked (Xyl...) (chondroitin sulfate) serine glycan. N-linked (GlcNAc...) asparagine glycosylation occurs at asparagine 4068. 7 cysteine pairs are disulfide-bonded: cysteine 4076-cysteine 4102, cysteine 4108-cysteine 4119, cysteine 4113-cysteine 4129, cysteine 4131-cysteine 4140, cysteine 4147-cysteine 4159, cysteine 4153-cysteine 4164, and cysteine 4166-cysteine 4175. EGF-like domains follow at residues 4104–4141 and 4143–4176; these read DSSP…DLCE and EENP…PRCQ. Residues 4149 to 4151 form a mediates motor neuron attachment region; the sequence is LRE. Serine 4179 and serine 4193 each carry an O-linked (Xyl...) (chondroitin sulfate) serine glycan. The Laminin G-like 3 domain occupies 4201-4389; it reads QYGAYFHDDG…AQAGANTRPC (189 aa). Ca(2+) contacts are provided by aspartate 4258 and leucine 4275. Residues 4299–4301 form a mediates motor neuron attachment region; sequence LRE. Ca(2+) contacts are provided by alanine 4325 and asparagine 4327. Cysteine 4355 and cysteine 4389 form a disulfide bridge. Residues 4364-4391 are disordered; sequence ARPGAPPPQPLDLQHRAQAGANTRPCPS.

As to quaternary structure, has a strong tendency to aggregate in dimers or stellate structures. Interacts with other basement membrane components such as laminin, prolargin and collagen type IV. Interacts with COL13A1. Interacts with FGFBP1. Interacts with VWA1. Interacts (via C-terminus) with ECM1 (via C-terminus). Interacts with SVEP1. Post-translationally, proteolytic processing produces the C-terminal angiogenic peptide, endorepellin. This peptide can be further processed to produce the LG3 peptide. O-glycosylated with core 1 or possibly core 8 glycans. Contains three heparan sulfate chains. Also contains chondroitin sulfate. As to expression, detected in cerebrospinal fluid, fibroblasts and urine (at protein level).

It is found in the secreted. It localises to the extracellular space. Its subcellular location is the extracellular matrix. The protein localises to the basement membrane. Integral component of basement membranes. Component of the glomerular basement membrane (GBM), responsible for the fixed negative electrostatic membrane charge, and which provides a barrier which is both size- and charge-selective. It serves as an attachment substrate for cells. Plays essential roles in vascularization. Critical for normal heart development and for regulating the vascular response to injury. Also required for avascular cartilage development. Its function is as follows. Anti-angiogenic and anti-tumor peptide that inhibits endothelial cell migration, collagen-induced endothelial tube morphogenesis and blood vessel growth in the chorioallantoic membrane. Blocks endothelial cell adhesion to fibronectin and type I collagen. Anti-tumor agent in neovascularization. Interaction with its ligand, integrin alpha2/beta1, is required for the anti-angiogenic properties. Evokes a reduction in phosphorylation of receptor tyrosine kinases via alpha2/beta1 integrin-mediated activation of the tyrosine phosphatase, PTPN6. Functionally, has anti-angiogenic properties that require binding of calcium ions for full activity. This is Basement membrane-specific heparan sulfate proteoglycan core protein (HSPG2) from Homo sapiens (Human).